Consider the following 347-residue polypeptide: GMP reductase (347 aa).

108–131 (ADFQKTKDIMALTDDLIFICIDIA) is a binding site for NADP(+). Residues Gly181 and Gly183 each coordinate K(+). Cys186 (thioimidate intermediate) is an active-site residue. 216–239 (IIGDGGCSCAGDVSKAFGGGADFV) contributes to the NADP(+) binding site.

Belongs to the IMPDH/GMPR family. GuaC type 1 subfamily. Homotetramer.

It catalyses the reaction IMP + NH4(+) + NADP(+) = GMP + NADPH + 2 H(+). Functionally, catalyzes the irreversible NADPH-dependent deamination of GMP to IMP. It functions in the conversion of nucleobase, nucleoside and nucleotide derivatives of G to A nucleotides, and in maintaining the intracellular balance of A and G nucleotides. In Aliivibrio fischeri (strain ATCC 700601 / ES114) (Vibrio fischeri), this protein is GMP reductase.